Here is a 738-residue protein sequence, read N- to C-terminus: Probable trehalase (738 aa).

Residues 1 to 44 form a disordered region; it reads MLQGMPKRSGSISELHDPFSSPDVYYGPATDPRRQKQPNKYSRT. Residues Arg-289, 296–297, Asn-333, Arg-342, 342–344, and Gly-463 each bind substrate; these read WD and RSQ. Residues Asp-465 and Glu-660 each act as proton donor/acceptor in the active site.

Belongs to the glycosyl hydrolase 37 family.

It catalyses the reaction alpha,alpha-trehalose + H2O = alpha-D-glucose + beta-D-glucose. In Eremothecium gossypii (strain ATCC 10895 / CBS 109.51 / FGSC 9923 / NRRL Y-1056) (Yeast), this protein is Probable trehalase (NTH2).